Consider the following 167-residue polypeptide: uncharacterized protein (167 aa).

The helical transmembrane segment at 39–59 (LSLFSLSPLFLLLSISSLIFS) threads the bilayer. A coiled-coil region spans residues 92 to 122 (LGTQIEMITQAMTTLESRVTDLQQESNDHRT). The tract at residues 134-167 (RDLGDENRPKPTTNKMIATGEQHKGEVSTSLFHD) is disordered. Residues 154–167 (EQHKGEVSTSLFHD) are compositionally biased toward basic and acidic residues.

The protein localises to the mitochondrion membrane. This is an uncharacterized protein from Arabidopsis thaliana (Mouse-ear cress).